We begin with the raw amino-acid sequence, 824 residues long: MGGSSASRNQSSLLEDTHTSRSLISRLFSRSKTRHITDFHIRPVDPHRKYAKGDHVTGAVVLTVLRPIRITHLTVALHGFVKVFKSPNAAHEATINTAQIASGVTNRTRYLGNGLASLFQDEQVLSADGKLEAGRYEFNFDLVFPSKVNLPTSIDFERGTISYMISATLTRPTSITPTTVCDRKIYLVEKVDIGSIPAPRPRTISLEPISRRTRRRRTDRPSTLGGADRGSSLGDSHDVTSSDLDSSRAPESVAAESNIANDAAFEGQQAPQSPTRTEMPDVMSEVSTESAITSSSAGASVGYKVSEATGSSSGSQFGARTPTVEEKTITASVEMLKGGCLPGDFVPVKISVHHIKRIKSVHGVIVTLYRQGRIDSAPPISSFQGLSKEDVRRLEKEEYFPRSKTGLSGLSLSSAGSCSVFRKDLSQAFGPLIIDPITLDASVTISVRVPEDVFPTIKGVPGELISFKYQMEVIVDLGGKLASQISSVQSKAGGISAGGAMPSARNPYESGGSSIMGSWGNSIIDTDQLRRHKGVISVVFEVPVGSVDSSRQRTRGGSLRPNPQARQPSQATESSQIPTVGYGPEDKQRAQSEPAGQEDYVHSHGSQGNGPMGPSTEYVPSPYYTPHDPRQQHAPIYIPPPDVPNDMGLSEKERARRAEQRLLPSQPPAAPFASTLSETTLEDIYNVEDDAAAGPSSAPIVGNSNGVATAPTLDEVESGEAAVGNSEDKLERERHRLLQEASAPPDFPEDYDTGDPGPSNQGPVTSATAPALSFQPSAPILSEDDEDPGSSYFNQHTSTGDYMGAGALGRPITAPHEPLPRYQR.

Disordered regions lie at residues 197 to 281 (PAPR…EMPD) and 547 to 824 (VDSS…RYQR). The span at 235–248 (DSHDVTSSDLDSSR) shows a compositional bias: basic and acidic residues. A compositionally biased stretch (polar residues) spans 564 to 578 (QARQPSQATESSQIP). Basic and acidic residues-rich tracts occupy residues 649-660 (LSEKERARRAEQ) and 726-738 (SEDK…HRLL). Polar residues-rich tracts occupy residues 758–768 (PSNQGPVTSAT) and 791–800 (SYFNQHTSTG).

Belongs to the arrestin family. PalF/RIM8 subfamily.

Required for the proteolytic cleavage of the transcription factor RIM101 in response to alkaline ambient pH. The protein is pH-response regulator protein palF/RIM8 (RIM8) of Pyricularia oryzae (strain 70-15 / ATCC MYA-4617 / FGSC 8958) (Rice blast fungus).